A 278-amino-acid chain; its full sequence is Small ribosomal subunit protein uS3 (278 aa).

A KH type-2 domain is found at 39–107 (LRKAISKKYV…KVQLNIVEIS (69 aa)). The interval 255–278 (AEIPAEEKPKRVVKKAENITKEEE) is disordered.

It belongs to the universal ribosomal protein uS3 family. Part of the 30S ribosomal subunit. Forms a tight complex with proteins S10 and S14.

Functionally, binds the lower part of the 30S subunit head. Binds mRNA in the 70S ribosome, positioning it for translation. The sequence is that of Small ribosomal subunit protein uS3 from Dehalococcoides mccartyi (strain ATCC BAA-2100 / JCM 16839 / KCTC 5957 / BAV1).